The following is a 503-amino-acid chain: ATP synthase subunit alpha (503 aa).

G170–T177 contributes to the ATP binding site.

It belongs to the ATPase alpha/beta chains family. In terms of assembly, F-type ATPases have 2 components, CF(1) - the catalytic core - and CF(0) - the membrane proton channel. CF(1) has five subunits: alpha(3), beta(3), gamma(1), delta(1), epsilon(1). CF(0) has three main subunits: a(1), b(2) and c(9-12). The alpha and beta chains form an alternating ring which encloses part of the gamma chain. CF(1) is attached to CF(0) by a central stalk formed by the gamma and epsilon chains, while a peripheral stalk is formed by the delta and b chains.

The protein localises to the cell inner membrane. The catalysed reaction is ATP + H2O + 4 H(+)(in) = ADP + phosphate + 5 H(+)(out). In terms of biological role, produces ATP from ADP in the presence of a proton gradient across the membrane. The alpha chain is a regulatory subunit. In Helicobacter pylori (strain G27), this protein is ATP synthase subunit alpha.